Consider the following 261-residue polypeptide: Receptor expression-enhancing protein 4 (261 aa).

Helical transmembrane passes span 1–21 and 35–55; these read MVSWIISRAVVLVFGLLYPAY and YVRWMMYWIVFALFMTVETFT. Residues 177 to 261 form a disordered region; it reads ELHRRPIGYP…KKPAQSEPEN (85 aa). Residues 191–202 are compositionally biased toward basic and acidic residues; it reads ADSDSMDERWSD.

This sequence belongs to the DP1 family. In terms of assembly, interacts with microtubules. As to expression, during gastrulation, expressed on the dorsal side of the embryo and then in the neural plate and neural tube. At tailbud stages, expressed in the somites. Expressed in the neural tube later in development.

Its subcellular location is the endoplasmic reticulum membrane. Functionally, microtubule-binding protein required to ensure proper cell division and nuclear envelope reassembly by sequestering the endoplasmic reticulum away from chromosomes during mitosis. Probably acts by clearing the endoplasmic reticulum membrane from metaphase chromosomes. May play a role in the maintenance of both the nervous system and the musculature. This Xenopus tropicalis (Western clawed frog) protein is Receptor expression-enhancing protein 4 (reep4).